A 490-amino-acid polypeptide reads, in one-letter code: uncharacterized protein (490 aa).

The helical transmembrane segment at 27 to 47 threads the bilayer; that stretch reads VYVFLTTIILLLSLISTLIII.

It localises to the membrane. This is an uncharacterized protein from Borreliella burgdorferi (strain ATCC 35210 / DSM 4680 / CIP 102532 / B31) (Borrelia burgdorferi).